The following is a 769-amino-acid chain: TSC22 domain family protein 2 (769 aa).

Disordered stretches follow at residues 20 to 86 (AQVA…TVSP), 224 to 292 (HGLD…PQPM), 334 to 353 (AQPG…YPQP), and 520 to 563 (VPAP…SLPQ). Over residues 28–37 (EDTESLDDPD) the composition is skewed to acidic residues. The span at 229 to 252 (GTDSSLTAVSQLPPSEKMSQPTLA) shows a compositional bias: polar residues. Residues 269-279 (GGAVAPSSASL) are compositionally biased toward low complexity. The segment covering 531–541 (SSHTPVSRSSS) has biased composition (low complexity). Residues 542 to 563 (VIQQVGSPLAQGTHSAPTSLPQ) are compositionally biased toward polar residues. Positions 691-725 (MYAVREEVEVLKEQIKELVERNSLLERENALLKSL) form a coiled coil. The span at 726 to 745 (SNNDQLSQLPAQQANPGSTS) shows a compositional bias: polar residues. The tract at residues 726 to 769 (SNNDQLSQLPAQQANPGSTSQQQAMIAQPPQPTQPPQQPNVSSA) is disordered. The span at 754 to 763 (PPQPTQPPQQ) shows a compositional bias: pro residues.

It belongs to the TSC-22/Dip/Bun family. Interacts with NRBP1. Interacts with PKM isoform M2; the interaction results in reduced nuclear levels of PKM isoform M2, leading to repression of cyclin CCND1 transcription and reduced cell growth. Interacts with WDR77. As to expression, expressed in the cortex, medulla and papilla of the kidney. Expressed in the kidney.

Functionally, reduces the level of nuclear PKM isoform M2 which results in repression of cyclin CCND1 transcription and reduced cell growth. In terms of biological role, may protect kidney cells from hyperosmotic stress. This chain is TSC22 domain family protein 2, found in Mus musculus (Mouse).